The primary structure comprises 342 residues: MGSTCVRIAIDAMGGDHAPNEIVAGAVRASEELGVKVLLVGDPQQIASALPPKTNLERVEIVPAEEAIAMDEEPLNAVRRKRKASINVAMDLVKREQADAIFSAGHSGAAMASALLRLGRLPGVDRPAIGTVFPTIKAGKPVLILDVGANVDCRPKFLEQFAVIGSIYSQYVLGTGEPPKVGLLNIGEEDTKGNELALRTHQLLKDNPNINFIGNAEGRDVLSGEFDVIVCDGFVGNILLKFAEAIGGVILQILREELPQGLHGQIGTAILKPNLTRIKQRMDHAEHGGALLLGVSGVCLIGHGSSQAPSVFNAIRMAKEAVDNQVMQQLQSQYEILHSASD.

The protein belongs to the PlsX family. In terms of assembly, homodimer. Probably interacts with PlsY.

It is found in the cytoplasm. It carries out the reaction a fatty acyl-[ACP] + phosphate = an acyl phosphate + holo-[ACP]. Its pathway is lipid metabolism; phospholipid metabolism. Functionally, catalyzes the reversible formation of acyl-phosphate (acyl-PO(4)) from acyl-[acyl-carrier-protein] (acyl-ACP). This enzyme utilizes acyl-ACP as fatty acyl donor, but not acyl-CoA. The protein is Phosphate acyltransferase of Trichormus variabilis (strain ATCC 29413 / PCC 7937) (Anabaena variabilis).